We begin with the raw amino-acid sequence, 89 residues long: Small ribosomal subunit protein uS14A (89 aa).

It belongs to the universal ribosomal protein uS14 family. In terms of assembly, contacts proteins S3 and S10. Part of the 30S ribosomal subunit.

Binds 16S rRNA, required for the assembly of 30S particles and may also be responsible for determining the conformation of the 16S rRNA at the A site. Its function is as follows. Non-essential protein. A second form of uS14, it can integrate into the 30S subunit where it partially compensates for loss of the major uS14 protein (AC P12878) in restoring 70S formation, although it does not seem to be incorporated into the ribosome as well as the major uS14. The protein is Small ribosomal subunit protein uS14A of Bacillus subtilis (strain 168).